A 589-amino-acid chain; its full sequence is 3-(3-hydroxy-phenyl)propionate/3-hydroxycinnamic acid hydroxylase (589 aa).

Residues 15–44 (DVLIIGAGPVGLTLANTLGMAGVRVIVAEK) and 283–293 (FRVDRILLAGD) each bind FAD.

This sequence belongs to the PheA/TfdB FAD monooxygenase family. FAD serves as cofactor.

It catalyses the reaction 3-(3-hydroxyphenyl)propanoate + NADH + O2 + H(+) = 3-(2,3-dihydroxyphenyl)propanoate + NAD(+) + H2O. The catalysed reaction is (2E)-3-(3-hydroxyphenyl)prop-2-enoate + NADH + O2 + H(+) = (2E)-3-(2,3-dihydroxyphenyl)prop-2-enoate + NAD(+) + H2O. Its pathway is aromatic compound metabolism; 3-phenylpropanoate degradation. In terms of biological role, catalyzes the insertion of one atom of molecular oxygen into position 2 of the phenyl ring of 3-(3-hydroxyphenyl)propionate (3-HPP) and hydroxycinnamic acid (3HCI). The chain is 3-(3-hydroxy-phenyl)propionate/3-hydroxycinnamic acid hydroxylase from Comamonas testosteroni (Pseudomonas testosteroni).